Consider the following 236-residue polypeptide: uncharacterized protein (236 aa).

One can recognise an HTH gntR-type domain in the interval 7–74; it reads RTNRRDIYLK…PKIGSFVSRV (68 aa). The segment at residues 34-53 is a DNA-binding region (H-T-H motif); that stretch reads ENELAASMGVSRTPVRESLI.

This is an uncharacterized protein from Streptomyces ambofaciens.